The primary structure comprises 413 residues: Hemocyanin type 2 unit e (413 aa).

N-linked (GlcNAc...) (high mannose) asparagine glycosylation is present at asparagine 17. Histidine 49 lines the Cu cation pocket. A disulfide bond links cysteine 55 and cysteine 66. Positions 67-69 (CVH) form a cross-link, 2'-(S-cysteinyl)-histidine (Cys-His). Cu cation is bound by residues histidine 69 and histidine 78. An N-linked (GlcNAc...) (high mannose) asparagine glycan is attached at asparagine 127. Cystine bridges form between cysteine 179–cysteine 246 and cysteine 336–cysteine 342. Cu cation is bound by residues histidine 189, histidine 193, and histidine 220.

This sequence belongs to the tyrosinase family. Hemocyanin subfamily. Decamers of large identical subunits, each containing 8 globular oxygen-binding functional units. Cu(2+) serves as cofactor. In terms of tissue distribution, hemolymph.

The protein resides in the secreted. It localises to the extracellular space. Functionally, hemocyanins are copper-containing oxygen carriers occurring freely dissolved in the hemolymph of many mollusks and arthropods. This chain is Hemocyanin type 2 unit e, found in Rapana venosa (Veined rapa whelk).